Reading from the N-terminus, the 361-residue chain is MAGNTIGQLFRVTTFGESHGLALGGIVDGVPPGIPLTEADLQHDLDRRRPGTSRYTTQRREPDQVKILSGVFDGVTTGTSIGLLIENTDQRSQDYSAIKDVFRPGHADYTYEQKYGLRDYRGGGRSSARETAMRVAAGAIAKKYLAEKFGIEIRGCLTQMGDIPLEIKDWRQVELNPFFCPDADKLDALDELMRALKKEGDSIGAKVTVMASGVPAGLGEPVFDRLDADIAHALMSINAVKGVEIGEGFNVVALRGSQNRDEITAQGFQSNHAGGILGGISSGQHIVAHMALKPTSSITVPGRTINRMGEEVEMITKGRHDPCVGIRAVPIAEAMLAIVLMDHLLRHRAQNADVKTEIPRW.

NADP(+) is bound by residues Arg48 and Arg54. FMN contacts are provided by residues 125–127, 238–239, Gly278, 293–297, and Arg319; these read RSS, NA, and KPTSS.

It belongs to the chorismate synthase family. Homotetramer. FMNH2 is required as a cofactor.

The catalysed reaction is 5-O-(1-carboxyvinyl)-3-phosphoshikimate = chorismate + phosphate. Its pathway is metabolic intermediate biosynthesis; chorismate biosynthesis; chorismate from D-erythrose 4-phosphate and phosphoenolpyruvate: step 7/7. Catalyzes the anti-1,4-elimination of the C-3 phosphate and the C-6 proR hydrogen from 5-enolpyruvylshikimate-3-phosphate (EPSP) to yield chorismate, which is the branch point compound that serves as the starting substrate for the three terminal pathways of aromatic amino acid biosynthesis. This reaction introduces a second double bond into the aromatic ring system. The protein is Chorismate synthase of Salmonella typhi.